Consider the following 198-residue polypeptide: MNLLVFFVYLXVCVIGSHSIXGSQQLSTKKCGGAICAMACTYGFVLDKDGCPICKCRDAPCPLVKCLPCKYGYVIDDNGCQTCECKPLDCGLVCLIYCPYGNIPDERGCPTCFCRPRPCKELECEKKCRNNVLDEIGCPTCKCKECLEPKKVGPCRALIPRYFYDVWSGKCKKFYWGGCQANGNNFKRKSQCCKRCKS.

The N-terminal stretch at 1–19 (MNLLVFFVYLXVCVIGSHS) is a signal peptide. 4 Antistasin-like domains span residues 31–56 (CGGAICAMACTYGFVLDKDGCPICKC), 56–85 (CRDAPCPLVKCLPCKYGYVIDDNGCQTCEC), 85–114 (CKPLDCGLVCLIYCPYGNIPDERGCPTCFC), and 114–143 (CRPRPCKELECEKKCRNNVLDEIGCPTCKC). The BPTI/Kunitz inhibitor domain maps to 146–196 (CLEPKKVGPCRALIPRYFYDVWSGKCKKFYWGGCQANGNNFKRKSQCCKRC). 3 cysteine pairs are disulfide-bonded: cysteine 146–cysteine 196, cysteine 155–cysteine 179, and cysteine 171–cysteine 192.

As to expression, nacreous layer of shell (at protein level).

Its subcellular location is the secreted. The polypeptide is BPTI/Kunitz domain-containing protein 4 (Margaritifera margaritifera (Freshwater pearl mussel)).